An 885-amino-acid polypeptide reads, in one-letter code: Conidiophore development regulator abaA (885 aa).

Polar residues predominate over residues 1-20 (MSSLFQPRPVLSSQRYSQSP). A disordered region spans residues 1 to 25 (MSSLFQPRPVLSSQRYSQSPDYVDT). A DNA-binding region (TEA) is located at residues 124–217 (QKDKGGVWRR…QVVKKFFEDL (94 aa)). Disordered regions lie at residues 502–539 (KEKR…WTRR) and 817–885 (APGS…TAGW). 2 stretches are compositionally biased toward basic and acidic residues: residues 508–521 (YADG…ERAG) and 831–840 (VESHAGDHHG).

The protein belongs to the TEC1 family.

The protein resides in the nucleus. BrlA, abaA and wetA are pivotal regulators of conidiophore development and conidium maturation. They act individually and together to regulate their own expression and that of numerous other sporulation-specific genes. BrlA, abaA and wetA act together to positively regulate the expression of the Pks1 gene cluster that mediates the biosynthesis of an anthraquinone derivative pigment that contributes to conidial pigmentation that provides protection from UV radiation, heat and cold stress. This is Conidiophore development regulator abaA from Metarhizium robertsii (strain ARSEF 23 / ATCC MYA-3075) (Metarhizium anisopliae (strain ARSEF 23)).